The primary structure comprises 1179 residues: Pesticidal crystal protein Cry1Ad (1179 aa).

The protein belongs to the delta endotoxin family.

In terms of biological role, promotes colloidosmotic lysis by binding to the midgut epithelial cells of many lepidopteran larvae. The protein is Pesticidal crystal protein Cry1Ad (cry1Ad) of Bacillus thuringiensis subsp. aizawai.